The sequence spans 318 residues: D-alanine--D-alanine ligase B (318 aa).

In terms of domain architecture, ATP-grasp spans 117 to 315 (KQVWLSLGLS…FEALVWRVLE (199 aa)). ATP is bound at residue 146-201 (AEQIGLPVIVKPANEGSSVGVSRVFDQAQLDEAVTLAARYDGALLMEQLIEGDELT). Mg(2+) is bound by residues Asp-268, Glu-282, and Asn-284.

It belongs to the D-alanine--D-alanine ligase family. The cofactor is Mg(2+). Requires Mn(2+) as cofactor.

The protein localises to the cytoplasm. It catalyses the reaction 2 D-alanine + ATP = D-alanyl-D-alanine + ADP + phosphate + H(+). It functions in the pathway cell wall biogenesis; peptidoglycan biosynthesis. Cell wall formation. The protein is D-alanine--D-alanine ligase B of Xanthomonas campestris pv. campestris (strain ATCC 33913 / DSM 3586 / NCPPB 528 / LMG 568 / P 25).